Reading from the N-terminus, the 245-residue chain is MASLSKPSLPSYLCFLLLLLHVSSSYGGQFRVIGPSHPIQALVGDAAELPCRISPGKNATGMEVGWYRSPFSRVVHLYRNGKDQDGEQAPEYRGRTELLKDDIGEGKVTLKIRNVRFPDEGGFTCFFRDHSYQEEAAMQLKVEDPFYWVSPGVLVLLAVLPVLFLQITVGLVFLYLQHRLRGKLRAEIENLHRTFDPHFLRVPCWKITLFVIVPVLGPLVALIICYNWLHRRLAGQFLEELRNPF.

An N-terminal signal peptide occupies residues 1–27 (MASLSKPSLPSYLCFLLLLLHVSSSYG). Over 28 to 152 (GQFRVIGPSH…EDPFYWVSPG (125 aa)) the chain is Extracellular. Residues 29-143 (QFRVIGPSHP…EEAAMQLKVE (115 aa)) form the Ig-like V-type domain. Residues Cys51 and Cys125 are joined by a disulfide bond. A glycan (N-linked (GlcNAc...) asparagine) is linked at Asn58. The chain crosses the membrane as a helical span at residues 153-173 (VLVLLAVLPVLFLQITVGLVF). The Cytoplasmic segment spans residues 174–208 (LYLQHRLRGKLRAEIENLHRTFDPHFLRVPCWKIT). A helical membrane pass occupies residues 209 to 229 (LFVIVPVLGPLVALIICYNWL). Over 230-245 (HRRLAGQFLEELRNPF) the chain is Extracellular.

This sequence belongs to the immunoglobulin superfamily. BTN/MOG family. In terms of assembly, homodimer.

It localises to the membrane. Functionally, minor component of the myelin sheath. May be involved in completion and/or maintenance of the myelin sheath and in cell-cell communication. Mediates homophilic cell-cell adhesion. In Callithrix jacchus (White-tufted-ear marmoset), this protein is Myelin-oligodendrocyte glycoprotein (MOG).